The primary structure comprises 324 residues: tRNA uridine(34) hydroxylase (324 aa).

The region spanning 145–239 (NDKKTIFIDM…YVHDARKNGL (95 aa)) is the Rhodanese domain. Cysteine 199 serves as the catalytic Cysteine persulfide intermediate.

It belongs to the TrhO family.

The catalysed reaction is uridine(34) in tRNA + AH2 + O2 = 5-hydroxyuridine(34) in tRNA + A + H2O. Its function is as follows. Catalyzes oxygen-dependent 5-hydroxyuridine (ho5U) modification at position 34 in tRNAs. In Buchnera aphidicola subsp. Acyrthosiphon pisum (strain Tuc7), this protein is tRNA uridine(34) hydroxylase.